The chain runs to 100 residues: Small ribosomal subunit protein uS14 (100 aa).

Belongs to the universal ribosomal protein uS14 family. As to quaternary structure, part of the 30S ribosomal subunit. Contacts proteins S3 and S10.

Functionally, binds 16S rRNA, required for the assembly of 30S particles and may also be responsible for determining the conformation of the 16S rRNA at the A site. The protein is Small ribosomal subunit protein uS14 of Synechococcus sp. (strain CC9902).